Reading from the N-terminus, the 165-residue chain is UPF0114 protein in repA1-repA2 intergenic region (165 aa).

Helical transmembrane passes span 10-32, 53-75, and 136-155; these read YASR…LLTL, LILI…MVMF, and IMWC…GMAC.

This sequence belongs to the UPF0114 family.

The protein localises to the cell membrane. In Buchnera aphidicola subsp. Geoica urticularia, this protein is UPF0114 protein in repA1-repA2 intergenic region.